The following is a 773-amino-acid chain: C-Maf-inducing protein (773 aa).

Residues M1–G28 are disordered. The PH domain occupies L54–Y163. 4 positions are modified to phosphoserine: S349, S377, S382, and S660. 4 LRR repeats span residues N663 to P686, S687 to S707, M712 to S732, and S736 to K756.

Interacts with FLNA.

The protein resides in the nucleus. It is found in the cytoplasm. Plays a role in T-cell signaling pathway. This Mus musculus (Mouse) protein is C-Maf-inducing protein (Cmip).